A 321-amino-acid polypeptide reads, in one-letter code: G-protein coupled receptor aex-2 (321 aa).

The Extracellular portion of the chain corresponds to 1–24; that stretch reads MNSTDIIANVTKPFVENLTLGETA. Asparagine 2, asparagine 9, and asparagine 17 each carry an N-linked (GlcNAc...) asparagine glycan. Residues 25–45 traverse the membrane as a helical segment; the sequence is FYISCGIVGTVFNALVLWIAL. Residues 46–55 lie on the Cytoplasmic side of the membrane; that stretch reads TYINTEDKPR. The chain crosses the membrane as a helical span at residues 56-76; the sequence is QIIVINMTVADLLMCIVYMKT. The Extracellular segment spans residues 77-90; the sequence is RPWLSHFNLWLCHP. Cysteine 88 and cysteine 161 are oxidised to a cystine. A helical membrane pass occupies residues 91–111; sequence YYVIIWTCQMCSCLNLVWLNV. Residues 112–132 are Cytoplasmic-facing; the sequence is DKLIYIQFPLHYYQIVNRKRL. The chain crosses the membrane as a helical span at residues 133–153; the sequence is LWITAATWGGLYAMNIALVTF. Topologically, residues 154 to 175 are extracellular; the sequence is LKITRGSCLGVSLNPYVYLLSP. Residues 176–196 form a helical membrane-spanning segment; that stretch reads IFYVVMILTSFSLSALIYCIA. Topologically, residues 197 to 221 are cytoplasmic; the sequence is HNLTHMEERQRSKLFRRLFFLFSST. Residues 222–242 traverse the membrane as a helical segment; sequence LWTFFTCLPYRLLYLFSIFCG. Over 243 to 254 the chain is Extracellular; it reads ETCQINNYYKTA. The helical transmembrane segment at 255 to 275 threads the bilayer; sequence TNLFFRLLIVGIMINPVITIW. At 276–321 the chain is on the cytoplasmic side; that stretch reads TQRIYRLRLMRMFGRLRENSSTEVLMVSNRRASERPPEHTPLRCDM.

This sequence belongs to the G-protein coupled receptor 1 family. In terms of tissue distribution, expressed in the intestinal muscle, anal depressor, AVL and DVB GABAergic neurons, enteric muscles, the nerve ring, the ventral nerve cord and head mesodermal cells.

It is found in the cell membrane. The protein resides in the cell projection. Its subcellular location is the cilium. Functionally, G-protein coupled receptor for the nlp-40 neuropeptide. The activity of this receptor is mediated by G proteins which activate adenylyl cyclase. Plays a role in the defecation motor program, which is a coordinated series of three muscle contractions that occurs every 45 seconds. Specifically, acts in GABAergic neurons, such as AVL and DVB, to control the expulsion step of defecation. Required for fatty acid uptake and metabolism by intestinal cells and therefore regulates the levels of triglycerides in the intestine. This is G-protein coupled receptor aex-2 from Caenorhabditis elegans.